Here is a 344-residue protein sequence, read N- to C-terminus: MTSSWPQLLELLLRGGELEDDQAAALMQAWLAEELEPVQTGAFLAALRCRNYRPVELAAMARVLRAASPLPCPRPALPLVDTCGTGGDGADSFNISTAVAFTAAACGVVVAKHGNRSASGKVGSADVLEGLGLQLQAPLQQVVGALEQAGITFLFAPGWHPALKSLAPLRKCLGVRTVFNLLGPLVNPLQPDAQVLGVATEDLLEPMAGALQLLGLKRAVVVYGHGGLDEASLSGTNQLMVLEDGQLRRDQLDPQALGLALQPIDALSGGDLARNQTILKAVLQGQGSQAQKDVVALNTALVLWSAGQVSSWREGVQQAHDCLASGKPWQRFEQLAAALTPVGG.

5-phospho-alpha-D-ribose 1-diphosphate-binding positions include G84, 87 to 88 (GD), S92, 94 to 97 (NIST), 112 to 120 (KHGNRSASG), and S124. G84 contacts anthranilate. S96 provides a ligand contact to Mg(2+). An anthranilate-binding site is contributed by N115. An anthranilate-binding site is contributed by R170. Positions 229 and 230 each coordinate Mg(2+).

The protein belongs to the anthranilate phosphoribosyltransferase family. In terms of assembly, homodimer. It depends on Mg(2+) as a cofactor.

It carries out the reaction N-(5-phospho-beta-D-ribosyl)anthranilate + diphosphate = 5-phospho-alpha-D-ribose 1-diphosphate + anthranilate. It functions in the pathway amino-acid biosynthesis; L-tryptophan biosynthesis; L-tryptophan from chorismate: step 2/5. In terms of biological role, catalyzes the transfer of the phosphoribosyl group of 5-phosphorylribose-1-pyrophosphate (PRPP) to anthranilate to yield N-(5'-phosphoribosyl)-anthranilate (PRA). This chain is Anthranilate phosphoribosyltransferase, found in Synechococcus sp. (strain RCC307).